A 1097-amino-acid polypeptide reads, in one-letter code: DNA-directed RNA polymerase subunit beta (1097 aa).

The disordered stretch occupies residues 1071-1097 (MQDVNPKRNTPSRPTYESLGTSEYAED). The segment covering 1077 to 1091 (KRNTPSRPTYESLGT) has biased composition (polar residues).

The protein belongs to the RNA polymerase beta chain family. In terms of assembly, in cyanobacteria the RNAP catalytic core is composed of 2 alpha, 1 beta, 1 beta', 1 gamma and 1 omega subunit. When a sigma factor is associated with the core the holoenzyme is formed, which can initiate transcription.

The catalysed reaction is RNA(n) + a ribonucleoside 5'-triphosphate = RNA(n+1) + diphosphate. Functionally, DNA-dependent RNA polymerase catalyzes the transcription of DNA into RNA using the four ribonucleoside triphosphates as substrates. The polypeptide is DNA-directed RNA polymerase subunit beta (Prochlorococcus marinus subsp. pastoris (strain CCMP1986 / NIES-2087 / MED4)).